A 237-amino-acid chain; its full sequence is Large ribosomal subunit protein uL1 (237 aa).

The protein belongs to the universal ribosomal protein uL1 family. Part of the 50S ribosomal subunit.

Its function is as follows. Binds directly to 23S rRNA. The L1 stalk is quite mobile in the ribosome, and is involved in E site tRNA release. Protein L1 is also a translational repressor protein, it controls the translation of the L11 operon by binding to its mRNA. This Myxococcus xanthus (strain DK1622) protein is Large ribosomal subunit protein uL1.